Reading from the N-terminus, the 240-residue chain is UDP-2,3-diacylglucosamine hydrolase (240 aa).

The Mn(2+) site is built by aspartate 8, histidine 10, aspartate 41, asparagine 79, and histidine 114. 79-80 (NR) contributes to the substrate binding site. Residues aspartate 122, serine 160, asparagine 164, lysine 167, and histidine 195 each contribute to the substrate site. Mn(2+)-binding residues include histidine 195 and histidine 197.

This sequence belongs to the LpxH family. Requires Mn(2+) as cofactor.

The protein localises to the cell inner membrane. It catalyses the reaction UDP-2-N,3-O-bis[(3R)-3-hydroxytetradecanoyl]-alpha-D-glucosamine + H2O = 2-N,3-O-bis[(3R)-3-hydroxytetradecanoyl]-alpha-D-glucosaminyl 1-phosphate + UMP + 2 H(+). It functions in the pathway glycolipid biosynthesis; lipid IV(A) biosynthesis; lipid IV(A) from (3R)-3-hydroxytetradecanoyl-[acyl-carrier-protein] and UDP-N-acetyl-alpha-D-glucosamine: step 4/6. In terms of biological role, hydrolyzes the pyrophosphate bond of UDP-2,3-diacylglucosamine to yield 2,3-diacylglucosamine 1-phosphate (lipid X) and UMP by catalyzing the attack of water at the alpha-P atom. Involved in the biosynthesis of lipid A, a phosphorylated glycolipid that anchors the lipopolysaccharide to the outer membrane of the cell. The chain is UDP-2,3-diacylglucosamine hydrolase from Salmonella newport (strain SL254).